The following is a 349-amino-acid chain: MFNMINLLDLSLEDLKKWMIENKEKEFRAKQVLDWVYKGVYNFEAMKNIPKVITNKLQENFYLSVPSVVQKYVSKDESTVKFLFKYNDGNIIESVVMKYKHGNTICVSTQVGCKMGCTFCASTIGGIVRSLSHGEILGQVLKAQEETGERISNIVMMGSGEPLDNYDNSLNFIRMVNAENGLNIGQRHITLSTCGIVPKIRQLAEENLQITLAISLHAPNDNIRRKTMPIASVYSVEELIEACNYYINKTNRRITFEYALVSNLNDKEVHAEELATLLKGMLCHVNLIPVNKIDEKDFKSSSTNRIKNFSNILLKSGIQTTIRREMGSDINAACGQLRRRYVKNNSKEV.

The Proton acceptor role is filled by glutamate 93. The 231-residue stretch at tyrosine 99–aspartate 329 folds into the Radical SAM core domain. Cysteine 106 and cysteine 334 form a disulfide bridge. Cysteine 113, cysteine 117, and cysteine 120 together coordinate [4Fe-4S] cluster. S-adenosyl-L-methionine contacts are provided by residues glycine 160–glutamate 161, serine 192, serine 215–histidine 217, and asparagine 291. The active-site S-methylcysteine intermediate is the cysteine 334.

Belongs to the radical SAM superfamily. RlmN family. [4Fe-4S] cluster is required as a cofactor.

Its subcellular location is the cytoplasm. The catalysed reaction is adenosine(2503) in 23S rRNA + 2 reduced [2Fe-2S]-[ferredoxin] + 2 S-adenosyl-L-methionine = 2-methyladenosine(2503) in 23S rRNA + 5'-deoxyadenosine + L-methionine + 2 oxidized [2Fe-2S]-[ferredoxin] + S-adenosyl-L-homocysteine. The enzyme catalyses adenosine(37) in tRNA + 2 reduced [2Fe-2S]-[ferredoxin] + 2 S-adenosyl-L-methionine = 2-methyladenosine(37) in tRNA + 5'-deoxyadenosine + L-methionine + 2 oxidized [2Fe-2S]-[ferredoxin] + S-adenosyl-L-homocysteine. Its function is as follows. Specifically methylates position 2 of adenine 2503 in 23S rRNA and position 2 of adenine 37 in tRNAs. The polypeptide is Probable dual-specificity RNA methyltransferase RlmN (Clostridium tetani (strain Massachusetts / E88)).